Reading from the N-terminus, the 336-residue chain is Fructose-1,6-bisphosphatase class 1 (336 aa).

4 residues coordinate Mg(2+): glutamate 92, aspartate 115, leucine 117, and aspartate 118. Substrate contacts are provided by residues 118-121 (DGSS), asparagine 211, tyrosine 244, 262-264 (YLY), and lysine 274. Mg(2+) is bound at residue glutamate 280.

It belongs to the FBPase class 1 family. Homotetramer. It depends on Mg(2+) as a cofactor.

The protein resides in the cytoplasm. It carries out the reaction beta-D-fructose 1,6-bisphosphate + H2O = beta-D-fructose 6-phosphate + phosphate. The protein operates within carbohydrate biosynthesis; gluconeogenesis. This chain is Fructose-1,6-bisphosphatase class 1, found in Aliivibrio fischeri (strain ATCC 700601 / ES114) (Vibrio fischeri).